The primary structure comprises 606 residues: Kelch-like protein 41 (606 aa).

Ser-3 bears the Phosphoserine mark. Positions 33 to 100 constitute a BTB domain; the sequence is IDCTLKAGDK…LYSASIDLND (68 aa). Residues 135–237 enclose the BACK domain; sequence CLAILRLGLL…AEKYFKDHVE (103 aa). Kelch repeat units lie at residues 346–398, 399–447, 448–495, 497–542, and 544–599; these read QVYV…EVDD, KIYV…SHNG, MIYC…IHKG, IVIA…SLAG, and LYAI…TRLN.

In terms of assembly, interacts with NRAP. Part of a complex that contains CUL3, RBX1 and KLHL41. Interacts with LASP1. In terms of processing, ubiquitinated by E3 ubiquitin ligase complex formed by CUL3 and RBX1 and probably targeted for proteasome-independent degradation. Quinone-induced oxidative stress increases its ubiquitination. In terms of tissue distribution, skeletal muscle. Localized between laterally fusing myofibrils in skeletal muscle (at protein level). Expressed at a lower level in the heart compared to skeletal muscle.

It localises to the cytoplasm. It is found in the cytoskeleton. The protein resides in the cell projection. Its subcellular location is the pseudopodium. The protein localises to the ruffle. It localises to the myofibril. It is found in the sarcomere. The protein resides in the m line. Its subcellular location is the sarcoplasmic reticulum membrane. The protein localises to the endoplasmic reticulum membrane. Involved in skeletal muscle development and differentiation. Regulates proliferation and differentiation of myoblasts and plays a role in myofibril assembly by promoting lateral fusion of adjacent thin fibrils into mature, wide myofibrils. Required for pseudopod elongation in transformed cells. This is Kelch-like protein 41 (Klhl41) from Mus musculus (Mouse).